Here is a 539-residue protein sequence, read N- to C-terminus: Glucose-6-phosphate isomerase (539 aa).

E349 functions as the Proton donor in the catalytic mechanism. Catalysis depends on residues H380 and K508.

Belongs to the GPI family.

It is found in the cytoplasm. It catalyses the reaction alpha-D-glucose 6-phosphate = beta-D-fructose 6-phosphate. It participates in carbohydrate biosynthesis; gluconeogenesis. It functions in the pathway carbohydrate degradation; glycolysis; D-glyceraldehyde 3-phosphate and glycerone phosphate from D-glucose: step 2/4. Its function is as follows. Catalyzes the reversible isomerization of glucose-6-phosphate to fructose-6-phosphate. This is Glucose-6-phosphate isomerase from Caulobacter sp. (strain K31).